The primary structure comprises 523 residues: Cyclin-dependent kinase 17 (523 aa).

A Phosphoserine modification is found at serine 9. The segment at 30–55 (TIEENSSKDNEPIVKNGRPPTSHSMH) is disordered. A phosphoserine mark is found at serine 80, serine 92, and serine 105. The segment at 103 to 123 (MGSDGESDQASGTSSDEVQSP) is disordered. The span at 110–123 (DQASGTSSDEVQSP) shows a compositional bias: polar residues. A phosphoserine mark is found at serine 137, serine 146, serine 165, and serine 180. Positions 192–473 (YIKLEKLGEG…AEEAMKHVYF (282 aa)) constitute a Protein kinase domain. ATP is bound by residues 198–206 (LGEGTYATV) and lysine 221. Catalysis depends on aspartate 313, which acts as the Proton acceptor. Positions 501–523 (PGFRNSSYPETGHGKNRRQSMLF) are disordered. A compositionally biased stretch (basic residues) spans 514-523 (GKNRRQSMLF).

The protein belongs to the protein kinase superfamily. CMGC Ser/Thr protein kinase family. CDC2/CDKX subfamily. In terms of assembly, found in a complex containing CABLES1, CDK16 and TDRD7. Interacts with TDRD7.

The catalysed reaction is L-seryl-[protein] + ATP = O-phospho-L-seryl-[protein] + ADP + H(+). It carries out the reaction L-threonyl-[protein] + ATP = O-phospho-L-threonyl-[protein] + ADP + H(+). In terms of biological role, may play a role in terminally differentiated neurons. Has a Ser/Thr-phosphorylating activity for histone H1. This is Cyclin-dependent kinase 17 (CDK17) from Homo sapiens (Human).